Here is a 348-residue protein sequence, read N- to C-terminus: Phospho-2-dehydro-3-deoxyheptonate aldolase, Trp-sensitive (348 aa).

It belongs to the class-I DAHP synthase family.

The enzyme catalyses D-erythrose 4-phosphate + phosphoenolpyruvate + H2O = 7-phospho-2-dehydro-3-deoxy-D-arabino-heptonate + phosphate. The protein operates within metabolic intermediate biosynthesis; chorismate biosynthesis; chorismate from D-erythrose 4-phosphate and phosphoenolpyruvate: step 1/7. Functionally, stereospecific condensation of phosphoenolpyruvate (PEP) and D-erythrose-4-phosphate (E4P) giving rise to 3-deoxy-D-arabino-heptulosonate-7-phosphate (DAHP). In Escherichia coli (strain K12), this protein is Phospho-2-dehydro-3-deoxyheptonate aldolase, Trp-sensitive (aroH).